The primary structure comprises 758 residues: Transmembrane E3 ubiquitin-protein ligase 1 (758 aa).

The N-terminal stretch at 1–26 is a signal peptide; it reads MEIDGNTLVFIIVILFLFFSSPGGDG. The Lumenal portion of the chain corresponds to 27 to 398; the sequence is VSSQYEFNQL…YELKIMSIRK (372 aa). The helical transmembrane segment at 399–419 threads the bilayer; that stretch reads HLLFGIALFAAQIYLLLTQMH. Residues 420–431 are Cytoplasmic-facing; the sequence is HTNTPSMVNKIS. A helical membrane pass occupies residues 432-452; sequence FYCFSMINLVDGSLATLYFVA. The Lumenal portion of the chain corresponds to 453 to 458; that stretch reads ASVVPE. Residues 459 to 479 traverse the membrane as a helical segment; that stretch reads LYLPLVISAFSCFILASIFEI. Topologically, residues 480–523 are cytoplasmic; that stretch reads RYLISIYASQVNEQNVGIINLLRGNTGTYDENRPRPAFIPDEGS. Residues 524–544 traverse the membrane as a helical segment; the sequence is IGGSLYGRFFFMLIIFTFLIL. Residues 545 to 553 are Lumenal-facing; sequence SSTSWPRQL. Residues 554-574 form a helical membrane-spanning segment; that stretch reads RMVFEYILIFILNSYWIPQIF. The Cytoplasmic portion of the chain corresponds to 575–602; it reads RNAVKGIPSRRERARSSIGGNRSQNKMP. The chain crosses the membrane as a helical span at residues 603–623; that stretch reads LLWSFVIGTTIIRSLPVVYVF. Topologically, residues 624–635 are lumenal; it reads TYSSNVFRHHKD. A helical transmembrane segment spans residues 636-656; it reads VHFVVFLSLWLLFQISILYSQ. Residues 657 to 758 are Cytoplasmic-facing; the sequence is DVLGSRWFLP…PVCRSPLPPL (102 aa). An RING-type; atypical zinc finger spans residues 699 to 752; sequence CAICMSDVPIYIEEIPETHKVDQHSYMVTPCNHVFHTSCLENWMNYKLQCPVCR.

Component of the DSC E3 ligase complexes composed of at least TUL1, DSC2, DSC3, UBX3, CDC48 as well as VLD1 for the vacuole-localized complex or GLD1 for the Golgi/endosome-localized complex. Interacts with UBC4.

Its subcellular location is the golgi apparatus membrane. The catalysed reaction is S-ubiquitinyl-[E2 ubiquitin-conjugating enzyme]-L-cysteine + [acceptor protein]-L-lysine = [E2 ubiquitin-conjugating enzyme]-L-cysteine + N(6)-ubiquitinyl-[acceptor protein]-L-lysine.. It functions in the pathway protein modification; protein ubiquitination. Catalytic component of the DSC E3 ubiquitin ligase complexes that tag proteins present in Golgi, endosome and vacuole membranes and function in protein homeostasis under non-stress conditions and support a role in protein quality control. Mediates ubiquitination of vacuolar proteins such as CPS1, PPN1, PEP12 and other proteins containing exposed hydrophilic residues within their transmembrane domains, leading to their sorting into internal vesicles in late endosomes. Targets also the unpalmitoylated endosomal SNARE TLG1 to the MVB pathway. This is Transmembrane E3 ubiquitin-protein ligase 1 (TUL1) from Saccharomyces cerevisiae (strain ATCC 204508 / S288c) (Baker's yeast).